The chain runs to 515 residues: Maturase K (515 aa).

The protein belongs to the intron maturase 2 family. MatK subfamily.

The protein resides in the plastid. It localises to the chloroplast. In terms of biological role, usually encoded in the trnK tRNA gene intron. Probably assists in splicing its own and other chloroplast group II introns. This chain is Maturase K, found in Pseudotsuga menziesii (Douglas-fir).